A 257-amino-acid chain; its full sequence is tRNA (guanine-N(1)-)-methyltransferase (257 aa).

S-adenosyl-L-methionine is bound by residues G112 and 136–141 (LGDYVL).

The protein belongs to the RNA methyltransferase TrmD family. Homodimer.

It is found in the cytoplasm. The catalysed reaction is guanosine(37) in tRNA + S-adenosyl-L-methionine = N(1)-methylguanosine(37) in tRNA + S-adenosyl-L-homocysteine + H(+). Its function is as follows. Specifically methylates guanosine-37 in various tRNAs. In Salinispora tropica (strain ATCC BAA-916 / DSM 44818 / JCM 13857 / NBRC 105044 / CNB-440), this protein is tRNA (guanine-N(1)-)-methyltransferase.